The sequence spans 278 residues: Ras-related protein Rab-40B (278 aa).

Residues S23, G26, and K27 each contribute to the GTP site. The switch-I stretch occupies residues S41–I49. Mg(2+) is bound at residue D69. The GTP site is built by G72, N126, and R127. The switch-II stretch occupies residues G72–Q88. Residues L175–A228 form the SOCS box domain. The segment at S242–S278 is disordered. A compositionally biased stretch (basic residues) spans T248 to L259. Positions P267–S278 are enriched in polar residues. Residue C270 is the site of S-palmitoyl cysteine attachment. C275 carries S-geranylgeranyl cysteine lipidation.

Belongs to the small GTPase superfamily. Rab family. In terms of assembly, component of the cullin-5-RING E3 ubiquitin-protein ligase complex (ECS(RAB40B) complex) composed of CUL5, Elongin BC (ELOB and ELOC), RNF7/RBX2 and RAB40B; RAB40B interaction with ECS complex is GTP-independent. Binds (GTP-bound) LIMA1; interaction promotes LIMA1 subcellular localization in lamellipodia during cell migration. Interacts (GTP-bound) with TKS5/SH3PXD2A (via PX domain); interaction promotes invadopodia-mediated extracellular matrix degradation. Mg(2+) is required as a cofactor.

It localises to the cell membrane. The protein localises to the cytoplasm. The protein resides in the cytosol. Its subcellular location is the cell projection. It is found in the lamellipodium membrane. It localises to the ruffle. The catalysed reaction is GTP + H2O = GDP + phosphate + H(+). It participates in protein modification; protein ubiquitination. Its activity is regulated as follows. Regulated by guanine nucleotide exchange factors (GEFs) which promote the exchange of bound GDP for free GTP. Regulated by GTPase activating proteins (GAPs) which increase the GTP hydrolysis activity. Inhibited by GDP dissociation inhibitors (GDIs). In terms of biological role, RAB40B small GTPase acts as substrate-recognition components of the ECS(RAB40B) E3 ubiquitin ligase complex which mediates the ubiquitination of target proteins. The Rab40 subfamily belongs to the Rab family that are key regulators of intracellular membrane trafficking, from the formation of transport vesicles to their fusion with membranes. Rabs cycle between an inactive GDP-bound form and an active GTP-bound form that is able to recruit to membranes different sets of downstream effectors directly responsible for vesicle formation, movement, tethering and fusion. As part of the ECS(RAB40B) complex, GTP-bound RAB40B promotes LIMA1/EPLIN ubiquitination and degradation, thereby regulating leading-edge actin dynamics during cell migration. As part of the ECS(RAB40B) complex, GTP-bound RAB40B also ubiquitinates RAP2A GTPase which promotes its localization to lamellipodia and activation to drive cell migration. The ECS(RAB40B) complex does not mediate canonical ubiquitin-dependent degradation of RAP2. RAB40B also binds TKS5/SH3PXD2A effector independently from ECS complex to promote invadopodia-mediated extracellular matrix degradation. This Homo sapiens (Human) protein is Ras-related protein Rab-40B.